The primary structure comprises 311 residues: Fucose-specific lectin (311 aa).

Tandem repeats lie at residues 1–53, 54–103, 104–151, 152–209, 210–256, and 257–311. A 6 X approximate tandem repeats region spans residues 1 to 311; that stretch reads MSTPGAQEVL…LGRRALPPAE (311 aa). Beta-L-fucose contacts are provided by Arg-25, Glu-37, Trp-44, Arg-73, Glu-85, Trp-94, Arg-126, Glu-138, Trp-146, Arg-177, Gln-189, Trp-198, Arg-230, Gln-242, Arg-277, and Glu-291.

Belongs to the fungal fucose-specific lectin family. As to quaternary structure, homodimer.

In terms of biological role, lectin that specifically binds to L-fucose and weakly reacts with mannose and N-acetyl-neuraminic acid. Has strongest preference for the alpha-1,6-fucosylated chain (core fucose) on glycoproteins among alpha-1,2-, alpha-1,3-, alpha-1,4-, and alpha-1,6-fucosylated chains. Binds to fucose residues of IgE in mice and human, causing antigen-independent IgE-mediated mast cell activation and anaphylactoid reactions in mice and is possibly implicated in allergic response to Aspergillus oryzae in humans. Induces secretion of pro-inflammatory cytokines IL6 and IL8 implicated in ocular diseases such as mycotic keratitis, probably through its interaction with host toll-like receptors TLR2 and TLR4, followed by up-regulation of pro-inflammatory cytokines. This is Fucose-specific lectin from Aspergillus oryzae (strain ATCC 42149 / RIB 40) (Yellow koji mold).